Consider the following 303-residue polypeptide: Aspartate carbamoyltransferase catalytic subunit (303 aa).

Residues Arg-48 and Thr-49 each coordinate carbamoyl phosphate. Lys-76 is a binding site for L-aspartate. Residues Arg-98, His-129, and Gln-132 each coordinate carbamoyl phosphate. Residues Arg-162 and Arg-214 each contribute to the L-aspartate site. 2 residues coordinate carbamoyl phosphate: Ala-257 and Pro-258.

It belongs to the aspartate/ornithine carbamoyltransferase superfamily. ATCase family. In terms of assembly, heterododecamer (2C3:3R2) of six catalytic PyrB chains organized as two trimers (C3), and six regulatory PyrI chains organized as three dimers (R2).

It carries out the reaction carbamoyl phosphate + L-aspartate = N-carbamoyl-L-aspartate + phosphate + H(+). It participates in pyrimidine metabolism; UMP biosynthesis via de novo pathway; (S)-dihydroorotate from bicarbonate: step 2/3. Its function is as follows. Catalyzes the condensation of carbamoyl phosphate and aspartate to form carbamoyl aspartate and inorganic phosphate, the committed step in the de novo pyrimidine nucleotide biosynthesis pathway. The sequence is that of Aspartate carbamoyltransferase catalytic subunit from Leuconostoc citreum (strain KM20).